The primary structure comprises 354 residues: DNA polymerase IV (354 aa).

One can recognise a UmuC domain in the interval isoleucine 6–glycine 187. Residues aspartate 10 and aspartate 105 each coordinate Mg(2+). Glutamate 106 is an active-site residue.

The protein belongs to the DNA polymerase type-Y family. Monomer. Mg(2+) is required as a cofactor.

It localises to the cytoplasm. The catalysed reaction is DNA(n) + a 2'-deoxyribonucleoside 5'-triphosphate = DNA(n+1) + diphosphate. Poorly processive, error-prone DNA polymerase involved in untargeted mutagenesis. Copies undamaged DNA at stalled replication forks, which arise in vivo from mismatched or misaligned primer ends. These misaligned primers can be extended by PolIV. Exhibits no 3'-5' exonuclease (proofreading) activity. May be involved in translesional synthesis, in conjunction with the beta clamp from PolIII. The sequence is that of DNA polymerase IV from Pseudomonas putida (strain ATCC 700007 / DSM 6899 / JCM 31910 / BCRC 17059 / LMG 24140 / F1).